A 439-amino-acid chain; its full sequence is Transmembrane protease serine 11F (439 aa).

Residues 1-33 (MMYAPVEFSQTAYPRIEYQRRQQQFWDPIRLAL) are Cytoplasmic-facing. A helical; Signal-anchor for type II membrane protein membrane pass occupies residues 34-54 (FTLAIVAIVGITIGIVTHFVV). Residues 55–439 (EDDKSFYYLA…RDWIASKTGL (385 aa)) lie on the Extracellular side of the membrane. The SEA domain occupies 58–176 (KSFYYLASFQ…PSFSLTPIDS (119 aa)). One can recognise a Peptidase S1 domain in the interval 207–438 (IVQGRETAME…YRDWIASKTG (232 aa)). A disulfide bridge links Cys-234 with Cys-250. Residues His-249 and Asp-294 each act as charge relay system in the active site. Cystine bridges form between Cys-359–Cys-375 and Cys-386–Cys-414. The Charge relay system role is filled by Ser-390.

Belongs to the peptidase S1 family.

The protein resides in the membrane. Functionally, probable serine protease. This is Transmembrane protease serine 11F (Tmprss11f) from Mus musculus (Mouse).